A 445-amino-acid polypeptide reads, in one-letter code: Methylenetetrahydrofolate--tRNA-(uracil-5-)-methyltransferase TrmFO (445 aa).

10 to 15 (GGGLSG) lines the FAD pocket.

It belongs to the MnmG family. TrmFO subfamily. Requires FAD as cofactor.

Its subcellular location is the cytoplasm. It carries out the reaction uridine(54) in tRNA + (6R)-5,10-methylene-5,6,7,8-tetrahydrofolate + NADH + H(+) = 5-methyluridine(54) in tRNA + (6S)-5,6,7,8-tetrahydrofolate + NAD(+). The enzyme catalyses uridine(54) in tRNA + (6R)-5,10-methylene-5,6,7,8-tetrahydrofolate + NADPH + H(+) = 5-methyluridine(54) in tRNA + (6S)-5,6,7,8-tetrahydrofolate + NADP(+). Functionally, catalyzes the folate-dependent formation of 5-methyl-uridine at position 54 (M-5-U54) in all tRNAs. The protein is Methylenetetrahydrofolate--tRNA-(uracil-5-)-methyltransferase TrmFO of Lawsonia intracellularis (strain PHE/MN1-00).